We begin with the raw amino-acid sequence, 644 residues long: SURP and G-patch domain-containing protein 1 (644 aa).

Residues 44–54 are compositionally biased toward basic and acidic residues; it reads REIEARMEQKA. Disordered regions lie at residues 44-74 and 98-122; these read REIEARMEQKARQSHVASPQPPHPGEVADAQ and AQASTDSAPRAPPSSPAPSSLKRPL. A Phosphothreonine modification is found at Thr128. An SURP motif 1 repeat occupies 188–230; that stretch reads VIEKLARFVAEGGPELEKVAMEDYKDNPAFTFLHDKNSREFLY. The residue at position 253 (Ser253) is a Phosphoserine. The stretch at 263-306 is one SURP motif 2 repeat; that stretch reads LAEKLARFIADGGPEVETIALQNNRENQAFSFLYDPNSQGYRYY. Disordered regions lie at residues 316–342 and 360–412; these read AKAGSTGSLPAPVPNPSLRRKSAPEAL and PAVN…PSPL. Ser323 bears the Phosphoserine mark. The span at 360–369 shows a compositional bias: pro residues; it reads PAVNPTPSIP. A Nuclear localization signal motif is present at residues 379 to 385; it reads KRKRKSR. A phosphoserine mark is found at Ser408, Ser410, Ser413, and Ser484. The G-patch domain maps to 561 to 608; the sequence is VENIGYQMLMKMGWKEGEGLGTEGQGIKNPVNKGATTIDGAGFGIDRP.

As to quaternary structure, component of the spliceosome.

Its subcellular location is the nucleus. In terms of biological role, plays a role in pre-mRNA splicing. The chain is SURP and G-patch domain-containing protein 1 (Sugp1) from Rattus norvegicus (Rat).